The following is a 473-amino-acid chain: Protein translocase subunit SecA (473 aa).

Position 127 (D127) interacts with ATP. Residues 424–447 are disordered; it reads VAEGKAVHQDTSKQEPKKKQPIRK. C457, C459, C468, and C469 together coordinate Zn(2+).

This sequence belongs to the SecA family. Monomer and homodimer. Part of the essential Sec protein translocation apparatus which comprises SecA, SecYEG and auxiliary proteins SecDF. Other proteins may also be involved. Zn(2+) serves as cofactor.

Its subcellular location is the cell membrane. It is found in the cytoplasm. It carries out the reaction ATP + H2O + cellular proteinSide 1 = ADP + phosphate + cellular proteinSide 2.. Functionally, part of the Sec protein translocase complex. Interacts with the SecYEG preprotein conducting channel. Has a central role in coupling the hydrolysis of ATP to the transfer of proteins into and across the cell membrane, serving as an ATP-driven molecular motor driving the stepwise translocation of polypeptide chains across the membrane. The protein is Protein translocase subunit SecA of Cytobacillus firmus (Bacillus firmus).